The sequence spans 123 residues: Probable ketoamine kinase in tonB 3'region (123 aa).

The active-site Proton acceptor is the aspartate 26.

The protein belongs to the fructosamine kinase family.

Ketoamine kinase that phosphorylates ketoamines on the third carbon of the sugar moiety to generate ketoamine 3-phosphate. This is Probable ketoamine kinase in tonB 3'region from Klebsiella pneumoniae.